Consider the following 360-residue polypeptide: Phosphoserine aminotransferase (360 aa).

Arginine 42 provides a ligand contact to L-glutamate. Pyridoxal 5'-phosphate-binding positions include 76–77 (AS), tryptophan 102, threonine 152, aspartate 172, and glutamine 195. Lysine 196 carries the N6-(pyridoxal phosphate)lysine modification. Position 237–238 (237–238 (NT)) interacts with pyridoxal 5'-phosphate.

The protein belongs to the class-V pyridoxal-phosphate-dependent aminotransferase family. SerC subfamily. As to quaternary structure, homodimer. It depends on pyridoxal 5'-phosphate as a cofactor.

The protein localises to the cytoplasm. It catalyses the reaction O-phospho-L-serine + 2-oxoglutarate = 3-phosphooxypyruvate + L-glutamate. The catalysed reaction is 4-(phosphooxy)-L-threonine + 2-oxoglutarate = (R)-3-hydroxy-2-oxo-4-phosphooxybutanoate + L-glutamate. It participates in amino-acid biosynthesis; L-serine biosynthesis; L-serine from 3-phospho-D-glycerate: step 2/3. Its function is as follows. Catalyzes the reversible conversion of 3-phosphohydroxypyruvate to phosphoserine and of 3-hydroxy-2-oxo-4-phosphonooxybutanoate to phosphohydroxythreonine. The protein is Phosphoserine aminotransferase of Bacillus cereus (strain ZK / E33L).